Here is a 498-residue protein sequence, read N- to C-terminus: DNA primase (498 aa).

The segment at 35–59 (CPFHPDDTPSFYVSPSKQIFKCFGC) adopts a CHC2-type zinc-finger fold. The 82-residue stretch at 243–324 (GFAILVEGYF…EVYPVYLPEG (82 aa)) folds into the Toprim domain. Mg(2+) is bound by residues glutamate 249, aspartate 293, and aspartate 295.

It belongs to the DnaG primase family. In terms of assembly, monomer. Interacts with DnaB. Requires Zn(2+) as cofactor. It depends on Mg(2+) as a cofactor.

The enzyme catalyses ssDNA + n NTP = ssDNA/pppN(pN)n-1 hybrid + (n-1) diphosphate.. Its function is as follows. RNA polymerase that catalyzes the synthesis of short RNA molecules used as primers for DNA polymerase during DNA replication. This chain is DNA primase, found in Aquifex aeolicus (strain VF5).